The chain runs to 276 residues: Dermonecrotic toxin LlSicTox-alphaIV3 (276 aa).

H5 is a catalytic residue. Mg(2+)-binding residues include E25 and D27. The Nucleophile role is filled by H41. Intrachain disulfides connect C45-C51 and C47-C192. Position 85 (D85) interacts with Mg(2+).

The protein belongs to the arthropod phospholipase D family. Class II subfamily. Mg(2+) is required as a cofactor. In terms of tissue distribution, expressed by the venom gland.

Its subcellular location is the secreted. The enzyme catalyses an N-(acyl)-sphingosylphosphocholine = an N-(acyl)-sphingosyl-1,3-cyclic phosphate + choline. It carries out the reaction an N-(acyl)-sphingosylphosphoethanolamine = an N-(acyl)-sphingosyl-1,3-cyclic phosphate + ethanolamine. The catalysed reaction is a 1-acyl-sn-glycero-3-phosphocholine = a 1-acyl-sn-glycero-2,3-cyclic phosphate + choline. It catalyses the reaction a 1-acyl-sn-glycero-3-phosphoethanolamine = a 1-acyl-sn-glycero-2,3-cyclic phosphate + ethanolamine. In terms of biological role, dermonecrotic toxins cleave the phosphodiester linkage between the phosphate and headgroup of certain phospholipids (sphingolipid and lysolipid substrates), forming an alcohol (often choline) and a cyclic phosphate. This toxin acts on sphingomyelin (SM). It may also act on ceramide phosphoethanolamine (CPE), lysophosphatidylcholine (LPC) and lysophosphatidylethanolamine (LPE), but not on lysophosphatidylserine (LPS), and lysophosphatidylglycerol (LPG). It acts by transphosphatidylation, releasing exclusively cyclic phosphate products as second products. Induces dermonecrosis, hemolysis, increased vascular permeability, edema, inflammatory response, and platelet aggregation. This Loxosceles laeta (South American recluse spider) protein is Dermonecrotic toxin LlSicTox-alphaIV3.